Consider the following 198-residue polypeptide: Angiopoietin-like protein 8 (198 aa).

The signal sequence occupies residues methionine 1–alanine 21.

This sequence belongs to the ANGPTL8 family. In terms of assembly, interacts with ANGPTL3. In terms of processing, proteolytically cleaved at the N-terminus. As to expression, predominantly expressed in liver. Also expressed in adipose tissues.

It is found in the secreted. Its function is as follows. Hormone that acts as a blood lipid regulator by regulating serum triglyceride levels. May be involved in the metabolic transition between fasting and refeeding: required to direct fatty acids to adipose tissue for storage in the fed state. The polypeptide is Angiopoietin-like protein 8 (Homo sapiens (Human)).